The primary structure comprises 172 residues: uncharacterized protein (172 aa).

Helical transmembrane passes span Met46–Pro66, Leu76–Phe96, Trp104–Ser124, and Phe129–Ile149.

Its subcellular location is the endoplasmic reticulum membrane. This is an uncharacterized protein from Schizosaccharomyces pombe (strain 972 / ATCC 24843) (Fission yeast).